The chain runs to 407 residues: Substance-P receptor (407 aa).

Over 1-31 the chain is Extracellular; the sequence is MDNVLPMDSDLFPNISTNTSESNQFVQPTWQ. Asn-14 and Asn-18 each carry an N-linked (GlcNAc...) asparagine glycan. A helical transmembrane segment spans residues 32–54; that stretch reads IVLWAAAYTVIVVTSVVGNVVVI. Topologically, residues 55 to 64 are cytoplasmic; sequence WIILAHKRMR. The chain crosses the membrane as a helical span at residues 65–86; that stretch reads TVTNYFLVNLAFAEACMAAFNT. The Extracellular segment spans residues 87–106; that stretch reads VVNFTYAVHNVWYYGLFYCK. Cys-105 and Cys-180 are joined by a disulfide. A helical transmembrane segment spans residues 107–128; sequence FHNFFPIAALFASIYSMTAVAF. Residues 129–148 are Cytoplasmic-facing; the sequence is DRYMAIIHPLQPRLSATATK. The chain crosses the membrane as a helical span at residues 149–169; that stretch reads VVIFVIWVLALLLAFPQGYYS. Residues 170 to 194 are Extracellular-facing; it reads TTETMPSRVVCMIEWPEHPNRTYEK. The chain crosses the membrane as a helical span at residues 195 to 219; it reads AYHICVTVLIYFLPLLVIGYAYTVV. Residues 220 to 248 lie on the Cytoplasmic side of the membrane; the sequence is GITLWASEIPGDSSDRYHEQVSAKRKVVK. Residues 249-270 form a helical membrane-spanning segment; the sequence is MMIVVVCTFAICWLPFHVFFLL. Over 271–283 the chain is Extracellular; the sequence is PYINPDLYLKKFI. A helical membrane pass occupies residues 284–308; sequence QQVYLASMWLAMSSTMYNPIIYCCL. Residues 309–407 are Cytoplasmic-facing; it reads NDRFRLGFKH…SSSFYSNMLA (99 aa). Residue Cys-322 is the site of S-palmitoyl cysteine attachment. The tract at residues 362 to 407 is disordered; the sequence is VGAHEEEPEEGPKATPSSLDLTSNGSSRSNSKTMTESSSFYSNMLA. Residues 376–407 are compositionally biased toward polar residues; that stretch reads TPSSLDLTSNGSSRSNSKTMTESSSFYSNMLA.

Belongs to the G-protein coupled receptor 1 family. Interacts with ARRB1.

The protein resides in the cell membrane. Functionally, this is a receptor for the tachykinin neuropeptide substance P. It is probably associated with G proteins that activate a phosphatidylinositol-calcium second messenger system. The rank order of affinity of this receptor to tachykinins is: substance P &gt; substance K &gt; neuromedin-K. This chain is Substance-P receptor (Tacr1), found in Rattus norvegicus (Rat).